The sequence spans 252 residues: 2-succinyl-6-hydroxy-2,4-cyclohexadiene-1-carboxylate synthase (252 aa).

This sequence belongs to the AB hydrolase superfamily. MenH family. In terms of assembly, monomer.

It carries out the reaction 5-enolpyruvoyl-6-hydroxy-2-succinyl-cyclohex-3-ene-1-carboxylate = (1R,6R)-6-hydroxy-2-succinyl-cyclohexa-2,4-diene-1-carboxylate + pyruvate. It functions in the pathway quinol/quinone metabolism; 1,4-dihydroxy-2-naphthoate biosynthesis; 1,4-dihydroxy-2-naphthoate from chorismate: step 3/7. The protein operates within quinol/quinone metabolism; menaquinone biosynthesis. Its function is as follows. Catalyzes a proton abstraction reaction that results in 2,5-elimination of pyruvate from 2-succinyl-5-enolpyruvyl-6-hydroxy-3-cyclohexene-1-carboxylate (SEPHCHC) and the formation of 2-succinyl-6-hydroxy-2,4-cyclohexadiene-1-carboxylate (SHCHC). In Salmonella schwarzengrund (strain CVM19633), this protein is 2-succinyl-6-hydroxy-2,4-cyclohexadiene-1-carboxylate synthase.